Here is a 447-residue protein sequence, read N- to C-terminus: Argininosuccinate synthase (447 aa).

ATP contacts are provided by residues 17–25 and A43; that span reads AFSGGLDTS. Y99 is an L-citrulline binding site. Residues G129 and T131 each contribute to the ATP site. L-aspartate-binding residues include T131, N135, and D136. An L-citrulline-binding site is contributed by N135. D136 serves as a coordination point for ATP. 2 residues coordinate L-citrulline: R139 and S192. Residue D194 coordinates ATP. 3 residues coordinate L-citrulline: T201, E203, and E280.

Belongs to the argininosuccinate synthase family. Type 2 subfamily. As to quaternary structure, homotetramer.

It localises to the cytoplasm. The enzyme catalyses L-citrulline + L-aspartate + ATP = 2-(N(omega)-L-arginino)succinate + AMP + diphosphate + H(+). The protein operates within amino-acid biosynthesis; L-arginine biosynthesis; L-arginine from L-ornithine and carbamoyl phosphate: step 2/3. The polypeptide is Argininosuccinate synthase (argG) (Escherichia coli O157:H7).